The following is a 208-amino-acid chain: Small ribosomal subunit protein uS2 (208 aa).

This sequence belongs to the universal ribosomal protein uS2 family.

The protein is Small ribosomal subunit protein uS2 of Cenarchaeum symbiosum (strain A).